A 77-amino-acid chain; its full sequence is Large ribosomal subunit protein uL24 (77 aa).

The protein belongs to the universal ribosomal protein uL24 family. Part of the 50S ribosomal subunit.

Functionally, one of two assembly initiator proteins, it binds directly to the 5'-end of the 23S rRNA, where it nucleates assembly of the 50S subunit. Its function is as follows. One of the proteins that surrounds the polypeptide exit tunnel on the outside of the subunit. In Campylobacter fetus subsp. fetus (strain 82-40), this protein is Large ribosomal subunit protein uL24.